Reading from the N-terminus, the 428-residue chain is MSEIREVIAREILDSRGNPTVEVDVILEDGTWGRAAVPSGASTGAFEAVELRDNDPQRYLGKGVTQAVENVNSIIGPEILGFDALDQVGIDEYLIELDGTPNKGKLGANAILGVSMAVAKAAANYLGLPLYRYLGGTNARVLPAPMMNILNGGKHADNNVDIQEFMIMPLGASSFSEALRMGAEVFHNLKKVLKGKGYNTAVGDEGGFAPNLKSNEEAIEVIVEAIEKAGYTPGKDIYIALDVAATELYKDGFYVLEGEGVKKSAAEMVEYYEKLCAKYPIISIEDGMSEEDWDGWKLLTERLGKKIQLVGDDLFVTNVERLQKGIDLGVANSILIKLNQIGTITETLNTIELARQNGYTTIISHRSGETEDTTLADLAVAVNAGMIKTGAPSRTDRVAKYNQLLRIEEELDYTAIYKGLKAFYNIKA.

Gln-163 is a binding site for (2R)-2-phosphoglycerate. Glu-205 serves as the catalytic Proton donor. 3 residues coordinate Mg(2+): Asp-242, Glu-285, and Asp-312. Lys-337, Arg-366, Ser-367, and Lys-388 together coordinate (2R)-2-phosphoglycerate. The Proton acceptor role is filled by Lys-337.

It belongs to the enolase family. Requires Mg(2+) as cofactor.

The protein localises to the cytoplasm. The protein resides in the secreted. Its subcellular location is the cell surface. It carries out the reaction (2R)-2-phosphoglycerate = phosphoenolpyruvate + H2O. Its pathway is carbohydrate degradation; glycolysis; pyruvate from D-glyceraldehyde 3-phosphate: step 4/5. Functionally, catalyzes the reversible conversion of 2-phosphoglycerate (2-PG) into phosphoenolpyruvate (PEP). It is essential for the degradation of carbohydrates via glycolysis. This is Enolase from Carboxydothermus hydrogenoformans (strain ATCC BAA-161 / DSM 6008 / Z-2901).